The chain runs to 867 residues: DNA replication licensing factor mcm6 (867 aa).

Residues 51-76 are disordered; sequence IDKNNNNNNNEDNEDNNENENEYDEN. Positions 61 to 75 are enriched in acidic residues; the sequence is EDNEDNNENENEYDE. The 207-residue stretch at 420–626 folds into the MCM domain; that stretch reads IYQNLVNSIC…ESDHRIAEHI (207 aa). Residues Ser-473, Thr-474, Lys-476, Ser-477, and Asn-578 each coordinate ATP. The Arginine finger signature appears at 602-605; the sequence is SRFD. Arg-693 and Glu-696 together coordinate ADP.

It belongs to the MCM family. In terms of assembly, component of the MCM2-7 complex. The complex forms a toroidal hexameric ring with the proposed subunit order MCM2-MCM6-MCM4-MCM7-MCM3-MCM5 (By simililarity).

The protein localises to the nucleus. It catalyses the reaction ATP + H2O = ADP + phosphate + H(+). In terms of biological role, acts as a component of the MCM2-7 complex (MCM complex) which is the replicative helicase essential for 'once per cell cycle' DNA replication initiation and elongation in eukaryotic cells. Core component of CDC45-MCM-GINS (CMG) helicase, the molecular machine that unwinds template DNA during replication, and around which the replisome is built. The active ATPase sites in the MCM2-7 ring are formed through the interaction surfaces of two neighboring subunits such that a critical structure of a conserved arginine finger motif is provided in trans relative to the ATP-binding site of the Walker A box of the adjacent subunit. The six ATPase active sites, however, are likely to contribute differentially to the complex helicase activity. The polypeptide is DNA replication licensing factor mcm6 (mcm6) (Dictyostelium discoideum (Social amoeba)).